The chain runs to 193 residues: Capsid protein (193 aa).

It localises to the virion. In Apple chlorotic leaf spot virus (isolate apple) (ACLSV), this protein is Capsid protein.